A 169-amino-acid polypeptide reads, in one-letter code: PTS system glucose-specific EIIA component (169 aa).

Positions 39–143 (DVVFAEKIVG…STLTPVVISN (105 aa)) constitute a PTS EIIA type-1 domain. The Zn(2+) site is built by H76 and H91. H91 acts as the Tele-phosphohistidine intermediate; for EIIA activity in catalysis. Phosphohistidine; by HPr is present on H91.

In terms of assembly, heterodimer with glycerol kinase (glpk). Zn(2+) serves as cofactor.

The protein resides in the cytoplasm. Functionally, the phosphoenolpyruvate-dependent sugar phosphotransferase system (sugar PTS), a major carbohydrate active transport system, catalyzes the phosphorylation of incoming sugar substrates concomitantly with their translocation across the cell membrane. The enzyme II complex composed of PtsG and Crr is involved in glucose transport. The protein is PTS system glucose-specific EIIA component (crr) of Salmonella typhi.